We begin with the raw amino-acid sequence, 409 residues long: N-acetylglucosamine-6-phosphate deacetylase (409 aa).

Residue E143 participates in a divalent metal cation binding. Substrate is bound at residue 154–155 (AH). A divalent metal cation-binding residues include H211 and H232. Residues 235–236 (NA), R243, and 269–272 (DGIH) each bind substrate. The Proton donor/acceptor role is filled by D294. Substrate is bound at residue 328 to 330 (LSG).

This sequence belongs to the metallo-dependent hydrolases superfamily. NagA family. The cofactor is a divalent metal cation.

The enzyme catalyses N-acetyl-D-glucosamine 6-phosphate + H2O = D-glucosamine 6-phosphate + acetate. Its pathway is amino-sugar metabolism; N-acetylneuraminate degradation. Functionally, hydrolyzes the N-glycolyl group from N-glycolylglucosamine 6-phosphate (GlcNGc-6-P) in the N-glycolylneuraminic acid (Neu5Gc) degradation pathway. This chain is N-acetylglucosamine-6-phosphate deacetylase (Amdhd2), found in Rattus norvegicus (Rat).